The sequence spans 70 residues: Small ribosomal subunit protein bS21 (70 aa).

It belongs to the bacterial ribosomal protein bS21 family.

This Polaromonas naphthalenivorans (strain CJ2) protein is Small ribosomal subunit protein bS21.